The chain runs to 463 residues: Methionine aminopeptidase 2-2 (463 aa).

A disordered region spans residues Met-1–Thr-97. A compositionally biased stretch (polar residues) spans Asp-27–Gly-36. Residues Gly-46–Glu-57 show a composition bias toward acidic residues. Residues Lys-69 to Lys-85 are compositionally biased toward basic residues. Residues Ser-86–Thr-97 show a composition bias toward polar residues. Substrate is bound at residue His-215. A divalent metal cation-binding residues include Asp-236, Asp-247, and His-316. Substrate is bound at residue His-324. A divalent metal cation contacts are provided by Glu-349 and Glu-444.

The protein belongs to the peptidase M24A family. Methionine aminopeptidase eukaryotic type 2 subfamily. Co(2+) serves as cofactor. Requires Zn(2+) as cofactor. The cofactor is Mn(2+). Fe(2+) is required as a cofactor.

It localises to the cytoplasm. The catalysed reaction is Release of N-terminal amino acids, preferentially methionine, from peptides and arylamides.. In terms of biological role, cotranslationally removes the N-terminal methionine from nascent proteins. The N-terminal methionine is often cleaved when the second residue in the primary sequence is small and uncharged (Met-Ala-, Cys, Gly, Pro, Ser, Thr, or Val). This Neosartorya fischeri (strain ATCC 1020 / DSM 3700 / CBS 544.65 / FGSC A1164 / JCM 1740 / NRRL 181 / WB 181) (Aspergillus fischerianus) protein is Methionine aminopeptidase 2-2.